The following is a 1838-amino-acid chain: MELKSLGTEHKAAVHTAAHNPVGHGVALQQGSSSSSPQNAAASLAAEGKNRGKMPRIHQPSTAADGISAAHQQKKSFSLRGCLGTKKFSRSAPQGQPGTTHSKGATLRDLLARDDGETQHEAAAPDAARLTRSGGVKRRNMDDMAGRPMVKGGSGEDKVPTQQKRHQLNNFGQMRQTMLSKMAHPASANAGDRLQHSPPHIPGSHHEIKEEPVGSTSKATTAHADRVEIAQEDDDSEFQQLHQQRLARERENPPQPPKLGVATPISARFQPKLTAVAESVLEGTDTTQSPLKPQSMLKGSGAGVTPLAVTLDKGKLQLAPDNPPALNTLLKQTLGKDTQHYLAHHASSDGSQHLLLDNKGHLFDIKSTATSYSVLHNSHPGEIKGKLAQAGTGSVSVDGKSGKISLGSGTQSHNKTMLSQPGEAHRSLLTGIWQHPAGAARPQGESIRLHDDKIHILHPELGVWQSADKDTHSQLSRQADGKLYALKDNRTLQNLSDNKSSEKLVDKIKSYSVDQRGQVAILTDTPGRHKMSIMPSLDASPESHISLSLHFADAHQGLLHGKSELEAQSVAISHGRLVVADSEGKLFSAAIPKQGDGNELKMKAMPQHALDEHFGHDHQISGFFHDDHGQLNALVKNNFRQQHACPLGNDHQFHPGWNLTDALVIDNQLGLHHTNPEPHEILDMGHLGSLALQEGKLHYFDQLTKGWTGAESDCKQLKKGLDGAAYLLKDGEVKRLNINQSTSSIKHGTENVFSLPHVRNKPEPGDALQGLNKDDKAQAMAVIGVNKYLALTEKGDIRSFQIKPGTQQLERPAQTLSREGISGELKDIHVDHKQNLYALTHEGEVFHQPREAWQNGAESSSWHKLALPQSESKLKSLDMSHEHKPIATFEDGSQHQLKAGGWHAYAAPERGPLAVGTSGSQTVFNRLMQGVKGKVIPGSGLTVKLSAQTGGMTGAEGRKVSSKFSERIRAYAFNPTMSTPRPIKNAAYATQHGWQGREGLKPLYEMQGALIKQLDAHNVRHNAPQPDLQSKLETLDLGEHGAELLNDMKRFRDELEQSATRSVTVLGQHQGVLKSNGEINSEFKPSPGKALVQSFNVNRSGQDLSKSLQQAVHATPPSAESKLQSMLGHFVSAGVDMSHQKGEIPLGRQRDPNDKTALTKSRLILDTVTIGELHELADKAKLVSDHKPDADQIKQLRQQFDTLREKRYESNPVKHYTDMGFTHNKALEANYDAVKAFINAFKKEHHGVNLTTRTVLESQGSAELAKKLKNTLLSLDSGESMSFSRSYGGGVSTVFVPTLSKKVPVPVIPGAGITLDRAYNLSFSRTSGGLNVSFGRDGGVSGNIMVATGHDVMPYMTGKKTSAGNASDWLSAKHKISPDLRIGAAVSGTLQGTLQNSLKFKLTEDELPGFIHGLTHGTLTPAELLQKGIEHQMKQGSKLTFSVDTSANLDLRAGINLNEDGSKPNGVTARVSAGLSASANLAAGSRERSTTSGQFGSTTSASNNRPTFLNGVGAGANLTAALGVAHSSTHEGKPVGIFPAFTSTNVSAALALDNRTSQSISLELKRAEPVTSNDISELTSTLGKHFKDSATTKMLAALKELDDAKPAEQLHILQQHFSAKDVVGDERYEAVRNLKKLVIRQQAADSHSMELGSASHSTTYNNLSRINNDGIVELLHKHFDAALPASSAKRLGEMMNNDPALKDIIKQLQSTPFSSASVSMELKDGLREQTEKAILDGKVGREEVGVLFQDRNNLRVKSVSVSQSVSKSEGFNTPALLLGTSNSAAMSMERNIGTINFKYGQDQNTPRRFTLEGGIAQANPQVASALTDLKKEGLEMKS.

Over residues 1 to 12 (MELKSLGTEHKA) the composition is skewed to basic and acidic residues. Disordered regions lie at residues 1 to 72 (MELK…AAHQ), 86 to 163 (KKFS…PTQQ), 182 to 264 (MAHP…VATP), 281 to 300 (LEGT…LKGS), 398 to 418 (DGKS…KTML), and 1480 to 1505 (NLAA…SNNR). The segment covering 27 to 46 (ALQQGSSSSSPQNAAASLAA) has biased composition (low complexity). A compositionally biased stretch (polar residues) spans 91–103 (SAPQGQPGTTHSK). Residues 110–120 (LLARDDGETQH) are compositionally biased toward basic and acidic residues. Over residues 407-418 (GSGTQSHNKTML) the composition is skewed to polar residues. Low complexity predominate over residues 1480 to 1502 (NLAAGSRERSTTSGQFGSTTSAS).

The protein belongs to the AvrE family. In terms of assembly, interacts with the chaperone DspF (DspB/F).

It is found in the secreted. The protein resides in the host cell. Its activity is regulated as follows. Polyamidoamine dendrimers inhibit channel and virulence activities. Functionally, major virulence factor that may function as a water- and solute-permeable channel dedicated to creating osmotic/water potential perturbation and a water- and nutrient-rich apoplast in which bacteria multiply within the infected plant tissues. Expression in Xenopus oocytes results in inward and outward currents, permeability to water and osmolarity-dependent oocyte swelling and bursting. Its function is as follows. Acts as a major cell-death inducer during fire blight, a necrotic disease affecting plants of the rosaceous family, and during hypersensitive response (HR) on non-host plants. Essential for pathogenicity on host plants. Contributes quantitatively and in a strain-dependent fashion to HR elicitation in non-host plants such as tobacco. Induces cell death in leaves of apple, a host plant, and tobacco, a non-host plant. Also triggers necrosis in the widely used model, non-host, N.benthamiana and in yeast. Required for the transient multiplication and survival of E.amylovora in non-host A.thaliana leaves. In A.thaliana, triggers electrolyte leakage, activation of defense pathways, reactive oxygen species (ROS) accumulation and cell death. The toxicity of DspE in A.thaliana is associated with an early repression of de novo protein synthesis. This is Type III effector DspE from Erwinia amylovora (Fire blight bacteria).